The primary structure comprises 724 residues: MKKMNLITAALPYVNNIPHLGNLVQVLSADAFARYSKMSGIETLYICGTDEYGTATETKALIEKTTPLELCNKYYEIHKSIYKWFNIEFDIFGRTTNKHHQETVQNFFLKLEKNGYIKERETEQFFCNKDLIFLADRYVIGECPECQSMAKGDQCDNCSKLLNPTDLINPKCIICKNKPILKKTNHLYIDLPKIKTKLEKWIKNPTTSKNWNTNALKMTNAFLRDGLKERAITRDLKWGIPVPKKGYENKVFYVWFDAPIGYISITKNIVKNWESWWKNNKQVNLVQFIGKDNILFHTIMFPCIKIGSKENWTTLNQLSSSEYLNYENLKFSKSEGTGIFGNDVITTGIPSDVWRFYIYYNRPEKSDFQFIWQDLMERVNTELIDNFSNLVNRVLTFQKKFFGDVIETIEIQHKFWEQITPKYNKILNLFKNTELKSALKEILKISSFGNKIFQDNEPWKRKESSPQEIKELILNLIYLIRDLSILMMPFIPETSKKIQQFFGNSYQFSTKILGTKSGIKKIEFVEILFNKLEQKKINDLRLKYSGEKNMKEKEQPENLFREKVLLRVVKINKIERNPEAKNLFILKLDDGTNKDKQIVSSLEGYYTEEELLGKHIIIVDNLKPAKFRGIKSEGMLIAAEDKNKNFKIIIVEDSIKNPIAGERIILENDQNKDLTCPPKIDINKFSKANIITENGELKINGINLILEHSKNKILSKDIPNGIVC.

The 'HIGH' region motif lies at 12-22 (PYVNNIPHLGN). Cysteine 143, cysteine 146, cysteine 155, and cysteine 158 together coordinate Zn(2+). Residues 330 to 334 (KFSKS) carry the 'KMSKS' region motif. Lysine 333 provides a ligand contact to ATP. Residues 560–665 (FREKVLLRVV…KNPIAGERII (106 aa)) form the tRNA-binding domain.

It belongs to the class-I aminoacyl-tRNA synthetase family. MetG type 1 subfamily. In terms of assembly, homodimer. Zn(2+) serves as cofactor.

It localises to the cytoplasm. It carries out the reaction tRNA(Met) + L-methionine + ATP = L-methionyl-tRNA(Met) + AMP + diphosphate. Its function is as follows. Is required not only for elongation of protein synthesis but also for the initiation of all mRNA translation through initiator tRNA(fMet) aminoacylation. In Borreliella afzelii (strain PKo) (Borrelia afzelii), this protein is Methionine--tRNA ligase.